A 119-amino-acid chain; its full sequence is Ergochrome gene cluster protein CPUR_05426 (119 aa).

It functions in the pathway pigment biosynthesis. Functionally, part of the ergochrome gene cluster responsible for the typical purple-black color of the ergot sclerotia. The ergochrome gene cluster produces several ergot pigments including the yellow ergochrome secalonic acid and its derivatives, as well as the red anthraquinones endocrocin and clavorubin. The pathway begins with the synthesis of atrochrysone thioester by the polyketide synthase (PKS) CPUR_05437. The atrochrysone carboxyl ACP thioesterase CPUR_05436 then breaks the thioester bond and releases the atrochrysone carboxylic acid from CPUR_05437. The atrochrysone carboxylic acid is then converted to atrochrysone which is further transformed into emodin anthrone. The next step is performed by the anthrone oxygenase CPUR_05434 that catalyzes the oxidation of emodinanthrone to emodin. Emodin is further modified to yield monodictyphenone via several steps involving CPUR_05427, CPUR_05428, CPUR_05429 and CPUR_05430. The short chain dehydrogenase/reductase CPUR_05418 then catalyzes the C-5 ketoreduction to give the xanthone skeleton of the monomeric units. Ergochromes formation requires further dimerization steps of different xanthone units, probably catalyzed by the cytochrome P450 monooxygenase CPUR_05419. CPUR_05425, CPUR_05426 and CPUR_05431 are unique to Claviceps, thus it is likely that they are involved in further modification of xanthone units or in their dimerization. The yellow ergochromes and the red anthraquinone pigments endocrocin and clavorubin are products from the same PKS derived precursors and the latter are likely shunt products in the pathway of xanthone biosynthesis. It is proposed that atrochrysone carboxylic acid released from the PKS CPUR_05437 can also be converted to endocrocin anthrone which is further oxidized into endocrocin by CPUR_05435. Endocrocin could be then modified to clavorubin, possibly by CPUR_05423 and CPUR_05431. Clavorubin is the principal anthraquinone metabolite produced by the cluster with a much higher yield compared to endocrocin. The sequence is that of Ergochrome gene cluster protein CPUR_05426 from Claviceps purpurea (strain 20.1) (Ergot fungus).